Consider the following 142-residue polypeptide: Large ribosomal subunit protein uL13 (142 aa).

This sequence belongs to the universal ribosomal protein uL13 family. Part of the 50S ribosomal subunit.

This protein is one of the early assembly proteins of the 50S ribosomal subunit, although it is not seen to bind rRNA by itself. It is important during the early stages of 50S assembly. This Pelobacter propionicus (strain DSM 2379 / NBRC 103807 / OttBd1) protein is Large ribosomal subunit protein uL13.